The sequence spans 610 residues: Menin (610 aa).

Residues 214-390 (GVAERSWLYL…SLLEAGEERP (177 aa)) form an interaction with FANCD2 region. The disordered stretch occupies residues 460–552 (REAEAAEAEE…SPPPEGPVLT (93 aa)). Positions 484–500 (RRESKPEEPPPPKKPAL) are enriched in basic and acidic residues. 2 positions are modified to phosphoserine: Ser-487 and Ser-543. Phosphothreonine is present on Thr-594.

Component of the MLL-HCF complex, at least composed of KMT2A/MLL1, MEN1, ASH2L, RBBP5, DPY30, WDR5, HCFC1 and HCFC2. Component of the menin-associated histone methyltransferase complex, at least composed of KMT2B/MLL4, MEN1, ASH2L, RBBP5, DPY30 and WDR5. Interacts with POLR2B. Interacts with POLR2A phosphorylated at 'Ser-5', but not with the unphosphorylated, nor 'Ser-2' phosphorylated POLR2A forms. Interacts with FANCD2 and DBF4. Interacts with JUND (via MBM motif); inhibits the interaction of JUND with MAPK10 and the phosphorylation of JUND by MAP kinases MAPK8 and MAPK10. Interacts with SMAD3, but not with SMAD2, nor SMAD4. Directly interacts with NFKB1, NFKB2 and RELA. Interacts with KMT2A (via MBM motif). The KMT2A-MEN1 complex interacts with PSIP1 with a greater affinity as MEN1 enhances interaction of KMT2A with PSIP1. Interacts with the fusion protein KMT2A-MLLT3. As to expression, ubiquitous.

It is found in the nucleus. In terms of biological role, essential component of a MLL/SET1 histone methyltransferase (HMT) complex, a complex that specifically methylates 'Lys-4' of histone H3 (H3K4). Functions as a transcriptional regulator. Binds to the TERT promoter and represses telomerase expression. Plays a role in TGFB1-mediated inhibition of cell-proliferation, possibly regulating SMAD3 transcriptional activity. Represses JUND-mediated transcriptional activation on AP1 sites, as well as that mediated by NFKB subunit RELA. Positively regulates HOXC8 and HOXC6 gene expression. May be involved in normal hematopoiesis through the activation of HOXA9 expression. May be involved in DNA repair. The protein is Menin (MEN1) of Homo sapiens (Human).